We begin with the raw amino-acid sequence, 337 residues long: tRNA N6-adenosine threonylcarbamoyltransferase (337 aa).

Residues His-111 and His-115 each coordinate Fe cation. Substrate contacts are provided by residues 134 to 138 (LVSGG), Asp-167, Gly-180, and Asn-272. A Fe cation-binding site is contributed by Asp-300.

This sequence belongs to the KAE1 / TsaD family. The cofactor is Fe(2+).

The protein localises to the cytoplasm. The enzyme catalyses L-threonylcarbamoyladenylate + adenosine(37) in tRNA = N(6)-L-threonylcarbamoyladenosine(37) in tRNA + AMP + H(+). Functionally, required for the formation of a threonylcarbamoyl group on adenosine at position 37 (t(6)A37) in tRNAs that read codons beginning with adenine. Is involved in the transfer of the threonylcarbamoyl moiety of threonylcarbamoyl-AMP (TC-AMP) to the N6 group of A37, together with TsaE and TsaB. TsaD likely plays a direct catalytic role in this reaction. This is tRNA N6-adenosine threonylcarbamoyltransferase from Enterobacter sp. (strain 638).